We begin with the raw amino-acid sequence, 317 residues long: Putative AP2/ERF and B3 domain-containing protein Os01g0140700 (317 aa).

The interval 1–37 (MEQEAAMVVFSCNSGSGGSSSTTDSKQEEEEEEELAA) is disordered. Residues 27-37 (QEEEEEEELAA) show a composition bias toward acidic residues. Residues 66–121 (RYKGVVPQPNGRWGAQIYERHARVWLGTFPDEEAAARAYDVAALRFRGRDAVTNRA) constitute a DNA-binding region (AP2/ERF). Residues 178 to 287 (FEKAVTPSDV…EKHLLIDCKK (110 aa)) constitute a DNA-binding region (TF-B3).

It is found in the nucleus. The chain is Putative AP2/ERF and B3 domain-containing protein Os01g0140700 from Oryza sativa subsp. japonica (Rice).